Here is a 371-residue protein sequence, read N- to C-terminus: Probable diguanylate cyclase DgcC (371 aa).

5 helical membrane passes run 46-66 (AVGL…HPPP), 68-88 (WWWL…WQIA), 112-132 (WVGV…IMCL), 143-163 (FVAG…LTGI), and 171-191 (PLEW…FGWV). The GGDEF domain occupies 240–371 (RDATLLIIDI…AGRNRTEVAA (132 aa)). Mg(2+) is bound by residues Asp248 and Ile249. 2 residues coordinate substrate: Asn256 and Asp265. A Mg(2+)-binding site is contributed by Asp291.

The cofactor is Mg(2+).

It is found in the cell inner membrane. The catalysed reaction is 2 GTP = 3',3'-c-di-GMP + 2 diphosphate. The protein operates within purine metabolism; 3',5'-cyclic di-GMP biosynthesis. In terms of biological role, a probable diguanylate cyclase. The last member of a cascade of expressed proteins, its expression requires DgcM. DgcC production induces biosynthesis of cellulose in some E.coli isolates, but not in K12 strains. Cyclic-di-GMP is a second messenger which controls cell surface-associated traits in bacteria. The polypeptide is Probable diguanylate cyclase DgcC (Escherichia coli (strain K12)).